The primary structure comprises 209 residues: MSSQYSNVENLSPQTIRQVMRELQEMETTPPEGIKVLINESDVTDIQALIDGPAGTPYAAGIFRVKLTLNKDFPLTPPKAYFLTKIFHPNVAANGEICVNTLKKDWKPDLGIKHILLTIKCLLIVPNPESALNEEAGKMLLERYDDYSQRARMMTEIHAQPAKCGVGAVGDAKDDGGPSTKKHAGLDKKLQDKKKEKLLKEKKRMLKRL.

In terms of domain architecture, UBC core spans 14–160; that stretch reads QTIRQVMREL…ARMMTEIHAQ (147 aa). The active-site Glycyl thioester intermediate is cysteine 98. Positions 168 to 194 are disordered; sequence AVGDAKDDGGPSTKKHAGLDKKLQDKK. Residues 184 to 194 are compositionally biased toward basic and acidic residues; it reads AGLDKKLQDKK.

This sequence belongs to the ubiquitin-conjugating enzyme family.

The catalysed reaction is S-ubiquitinyl-[E1 ubiquitin-activating enzyme]-L-cysteine + [E2 ubiquitin-conjugating enzyme]-L-cysteine = [E1 ubiquitin-activating enzyme]-L-cysteine + S-ubiquitinyl-[E2 ubiquitin-conjugating enzyme]-L-cysteine.. Its pathway is protein modification; protein ubiquitination. Its function is as follows. Catalyzes the covalent attachment of ubiquitin to other proteins. Acts as an essential factor of the anaphase promoting complex/cyclosome (APC/C), a cell cycle-regulated ubiquitin ligase that controls progression through mitosis. Acts by specifically elongating polyubiquitin chains initiated by the E2 enzyme vih/UbcH10 on APC/C substrates, enhancing the degradation of APC/C substrates by the proteasome and promoting mitotic exit. The sequence is that of Ubiquitin-conjugating enzyme E2 S from Drosophila melanogaster (Fruit fly).